A 535-amino-acid polypeptide reads, in one-letter code: Unconventional prefoldin RPB5 interactor 1 (535 aa).

The residue at position 1 (Met-1) is an N-acetylmethionine. 4 disordered regions span residues 1 to 23 (MEAP…PALV), 223 to 330 (LLGE…VGDN), 352 to 383 (KNTT…QELP), and 412 to 431 (SRSR…AAEF). Positions 7-18 (ETPPDPSPPSAP) are enriched in pro residues. 2 stretches are compositionally biased toward polar residues: residues 253 to 265 (TNVN…TDSH) and 276 to 296 (EPFS…SSSY). Residues 299–320 (DDDDDDDDDDDDDNIDDDDGDN) are compositionally biased toward acidic residues. Ser-372 carries the phosphoserine; by RPS6KB1 modification. Position 373 is a phosphothreonine (Thr-373). Residues 417-427 (NSVCSDTSESS) are compositionally biased toward polar residues. Ser-442 bears the Phosphoserine mark.

It belongs to the RNA polymerase II subunit 5-mediating protein family. In terms of assembly, homodimer. Component of the PAQosome complex which is responsible for the biogenesis of several protein complexes and which consists of R2TP complex members RUVBL1, RUVBL2, RPAP3 and PIH1D1, URI complex members PFDN2, PFDN6, PDRG1, UXT and URI1 as well as ASDURF, POLR2E and DNAAF10/WDR92. Interacts with POLR2E/RPB5, RUVBL2 and RUVBL1. Interacts with PFDN2, PFDN4 and STAP1; the interactions are phosphorylation-dependent and occur in a growth-dependent manner in the mitochondrion. Interacts with UXT. Interacts with PPP1CC; the interaction is phosphorylation-dependent and occurs in a growth factor-dependent manner. Interacts (via the middle C-terminal region) with GTF2F1 and GTF2F2. Interacts with DMAP1. Interacts with TSC1 and TSC2. Interacts with PRPF8 and EFTUD2 in a ZNHIT2-dependent manner. Post-translationally, phosphorylated. Phosphorylation occurs essentially on serine residues. Phosphorylation occurs in response to androgen treatment in prostate cancer cells in a mTOR-dependent manner. Phosphorylated; hyperhosphorylated in mitochondria in a mTORC-dependent signaling pathway. Phosphorylated at Ser-372 by RPS6KB1 in a growth factor- and rapamycin-dependent manner. S6K1-mediated mitochondrial phosphorylation at Ser-372 disrupts the URI1-PPP1CC complex in the mitochondrion, relieves PPP1CC phosphatase inhibition activity and hence engages a negative feedback diminishing RPS6KB1 kinase activity, preventing sustained S6K1-dependent signaling. Ubiquitous. Expressed in ovarian cancers (at protein level). Expressed strongly in skeletal muscle. Expressed weakly in brain, heart, pancreas and in prostate epithelial cells.

The protein resides in the nucleus. The protein localises to the cytoplasm. Its subcellular location is the mitochondrion. It is found in the cell projection. It localises to the dendrite. Its function is as follows. Involved in gene transcription regulation. Acts as a transcriptional repressor in concert with the corepressor UXT to regulate androgen receptor (AR) transcription. May act as a tumor suppressor to repress AR-mediated gene transcription and to inhibit anchorage-independent growth in prostate cancer cells. Required for cell survival in ovarian cancer cells. Together with UXT, associates with chromatin to the NKX3-1 promoter region. Antagonizes transcriptional modulation via hepatitis B virus X protein. Plays a central role in maintaining S6K1 signaling and BAD phosphorylation under normal growth conditions thereby protecting cells from potential deleterious effects of sustained S6K1 signaling. The URI1-PPP1CC complex acts as a central component of a negative feedback mechanism that counteracts excessive S6K1 survival signaling to BAD in response to growth factors. Mediates inhibition of PPP1CC phosphatase activity in mitochondria. Coordinates the regulation of nutrient-sensitive gene expression availability in a mTOR-dependent manner. Seems to be a scaffolding protein able to assemble a prefoldin-like complex that contains PFDs and proteins with roles in transcription and ubiquitination. The sequence is that of Unconventional prefoldin RPB5 interactor 1 (URI1) from Homo sapiens (Human).